Consider the following 449-residue polypeptide: Tol-Pal system protein TolB (449 aa).

The signal sequence occupies residues 1 to 36; the sequence is MDCPNMPLHINRRQMLLSAATAAGALALGPARDAFG.

This sequence belongs to the TolB family. The Tol-Pal system is composed of five core proteins: the inner membrane proteins TolA, TolQ and TolR, the periplasmic protein TolB and the outer membrane protein Pal. They form a network linking the inner and outer membranes and the peptidoglycan layer.

Its subcellular location is the periplasm. In terms of biological role, part of the Tol-Pal system, which plays a role in outer membrane invagination during cell division and is important for maintaining outer membrane integrity. This Rhodopseudomonas palustris (strain HaA2) protein is Tol-Pal system protein TolB.